The sequence spans 499 residues: Aspartyl/glutamyl-tRNA(Asn/Gln) amidotransferase subunit B (499 aa).

This sequence belongs to the GatB/GatE family. GatB subfamily. In terms of assembly, heterotrimer of A, B and C subunits.

The catalysed reaction is L-glutamyl-tRNA(Gln) + L-glutamine + ATP + H2O = L-glutaminyl-tRNA(Gln) + L-glutamate + ADP + phosphate + H(+). The enzyme catalyses L-aspartyl-tRNA(Asn) + L-glutamine + ATP + H2O = L-asparaginyl-tRNA(Asn) + L-glutamate + ADP + phosphate + 2 H(+). Functionally, allows the formation of correctly charged Asn-tRNA(Asn) or Gln-tRNA(Gln) through the transamidation of misacylated Asp-tRNA(Asn) or Glu-tRNA(Gln) in organisms which lack either or both of asparaginyl-tRNA or glutaminyl-tRNA synthetases. The reaction takes place in the presence of glutamine and ATP through an activated phospho-Asp-tRNA(Asn) or phospho-Glu-tRNA(Gln). This Bartonella bacilliformis (strain ATCC 35685 / KC583 / Herrer 020/F12,63) protein is Aspartyl/glutamyl-tRNA(Asn/Gln) amidotransferase subunit B.